The following is a 714-amino-acid chain: DNA ligase (714 aa).

NAD(+)-binding positions include 48–52 (DADYD), 97–98 (SL), and glutamate 129. The active-site N6-AMP-lysine intermediate is the lysine 131. NAD(+) contacts are provided by arginine 152, glutamate 189, lysine 307, and lysine 331. 4 residues coordinate Zn(2+): cysteine 436, cysteine 439, cysteine 454, and cysteine 460. A BRCT domain is found at 637–714 (KQDTAVAGKT…TEDEWLALIG (78 aa)).

It belongs to the NAD-dependent DNA ligase family. LigA subfamily. The cofactor is Mg(2+). Mn(2+) is required as a cofactor.

The enzyme catalyses NAD(+) + (deoxyribonucleotide)n-3'-hydroxyl + 5'-phospho-(deoxyribonucleotide)m = (deoxyribonucleotide)n+m + AMP + beta-nicotinamide D-nucleotide.. Functionally, DNA ligase that catalyzes the formation of phosphodiester linkages between 5'-phosphoryl and 3'-hydroxyl groups in double-stranded DNA using NAD as a coenzyme and as the energy source for the reaction. It is essential for DNA replication and repair of damaged DNA. This Rhodopseudomonas palustris (strain BisB5) protein is DNA ligase.